Here is a 359-residue protein sequence, read N- to C-terminus: Histidinol-phosphate aminotransferase (359 aa).

Lys-217 carries the N6-(pyridoxal phosphate)lysine modification.

This sequence belongs to the class-II pyridoxal-phosphate-dependent aminotransferase family. Histidinol-phosphate aminotransferase subfamily. Homodimer. It depends on pyridoxal 5'-phosphate as a cofactor.

The catalysed reaction is L-histidinol phosphate + 2-oxoglutarate = 3-(imidazol-4-yl)-2-oxopropyl phosphate + L-glutamate. The protein operates within amino-acid biosynthesis; L-histidine biosynthesis; L-histidine from 5-phospho-alpha-D-ribose 1-diphosphate: step 7/9. In Salmonella typhi, this protein is Histidinol-phosphate aminotransferase.